A 208-amino-acid chain; its full sequence is Outer-membrane lipoprotein carrier protein (208 aa).

Residues 1–21 (MKRTATLLVVALILALNTAQA) form the signal peptide.

It belongs to the LolA family. Monomer.

It localises to the periplasm. Functionally, participates in the translocation of lipoproteins from the inner membrane to the outer membrane. Only forms a complex with a lipoprotein if the residue after the N-terminal Cys is not an aspartate (The Asp acts as a targeting signal to indicate that the lipoprotein should stay in the inner membrane). This Halorhodospira halophila (strain DSM 244 / SL1) (Ectothiorhodospira halophila (strain DSM 244 / SL1)) protein is Outer-membrane lipoprotein carrier protein.